Consider the following 631-residue polypeptide: MTKLLSYINTSEDLKHLSTEDLNKLAEELREFLISSISITGGHLAPNLGVVELTLAIHKVFSPIQDKIVWDVGHQSYIHKILTGRKEQFSTLRQFGGLSGFPKPEESRYDAFGTGHSSTSISAALGMAKARDLQGSNEEVLAVIGDGAMTGGMAFEAMNHAGHEQANMTVILNDNEMSIGTNVGALSSYLSRLRTDPKYHRIKEDVEFLLKRIPAIGGKMMKSVERVKDSMKYLMVSGMLFEELGFTYIGPIDGHNIPQLMEVLNNAKDKNGPVLVHVITKKGKGYEPAEKFPDKFHGTGPFEIETGNAPKKAETAPSYSKVFGDTISEIARKNESVVAITAAMKDGTGLTNFAREFPERFFDVGIAEQHAITFAAGLARKGFKPVVAIYSTFLQRAYDQIIHDVCMQDNPVIFAIDRAGIVGGDGETHQGLYDLSYLRSIPNLIVMAPKDEAELQRMLNTAVNINKPVAIRYPRGKGEGVTLWENMTPIPLYKGETIREGSQVAMIGVGKMVPDMLEVADMLKKEGIEPTVFNARFVKPLDESSILEIAQKHEYIYTFEENTELGGFGSQVLECLSKHGLAHKLIDRFCLPDEYIPHGDRSKVLSQYSLHSQELINKILNRLRGEQIEQG.

Residues H74 and 115 to 117 (GHS) each bind thiamine diphosphate. D146 lines the Mg(2+) pocket. Residues 147–148 (GA), N175, Y286, and E368 each bind thiamine diphosphate. A Mg(2+)-binding site is contributed by N175.

The protein belongs to the transketolase family. DXPS subfamily. As to quaternary structure, homodimer. Mg(2+) serves as cofactor. Requires thiamine diphosphate as cofactor.

It carries out the reaction D-glyceraldehyde 3-phosphate + pyruvate + H(+) = 1-deoxy-D-xylulose 5-phosphate + CO2. The protein operates within metabolic intermediate biosynthesis; 1-deoxy-D-xylulose 5-phosphate biosynthesis; 1-deoxy-D-xylulose 5-phosphate from D-glyceraldehyde 3-phosphate and pyruvate: step 1/1. Functionally, catalyzes the acyloin condensation reaction between C atoms 2 and 3 of pyruvate and glyceraldehyde 3-phosphate to yield 1-deoxy-D-xylulose-5-phosphate (DXP). This Natranaerobius thermophilus (strain ATCC BAA-1301 / DSM 18059 / JW/NM-WN-LF) protein is 1-deoxy-D-xylulose-5-phosphate synthase.